We begin with the raw amino-acid sequence, 189 residues long: Movement protein (189 aa).

Belongs to the tombusvirus/aureusvirus movement protein p22 family.

The protein resides in the host membrane. Transports viral genome to neighboring plant cells directly through plasmosdesmata, without any budding. The movement protein allows efficient cell to cell propagation, by bypassing the host cell wall barrier. This chain is Movement protein, found in Artichoke mottled crinkle virus (AMCV).